Reading from the N-terminus, the 564-residue chain is NAD-dependent malic enzyme (564 aa).

The active-site Proton donor is Y104. R157 is a binding site for NAD(+). The Proton acceptor role is filled by K175. The a divalent metal cation site is built by E246, D247, and D270. Residues D270 and N417 each coordinate NAD(+).

Belongs to the malic enzymes family. In terms of assembly, homotetramer. Mg(2+) serves as cofactor. It depends on Mn(2+) as a cofactor.

The catalysed reaction is (S)-malate + NAD(+) = pyruvate + CO2 + NADH. It catalyses the reaction oxaloacetate + H(+) = pyruvate + CO2. This is NAD-dependent malic enzyme from Aeromonas hydrophila subsp. hydrophila (strain ATCC 7966 / DSM 30187 / BCRC 13018 / CCUG 14551 / JCM 1027 / KCTC 2358 / NCIMB 9240 / NCTC 8049).